The following is a 177-amino-acid chain: Inner membrane-spanning protein YciB (177 aa).

A run of 5 helical transmembrane segments spans residues 22–42 (IFIASKSLIFISGLTCLLYWI), 50–70 (INLFSFITIAIFGSLTIIFHN), 76–96 (WKITIIYMIFSVILFISQFFM), 121–141 (FFWALFFLFCSILNIYVALCL), and 151–171 (VFGLSFLMFLSILITSIYINF).

This sequence belongs to the YciB family.

Its subcellular location is the cell inner membrane. In terms of biological role, plays a role in cell envelope biogenesis, maintenance of cell envelope integrity and membrane homeostasis. This chain is Inner membrane-spanning protein YciB, found in Buchnera aphidicola subsp. Schizaphis graminum (strain Sg).